We begin with the raw amino-acid sequence, 429 residues long: Glutamate-1-semialdehyde 2,1-aminomutase (429 aa).

Lysine 265 bears the N6-(pyridoxal phosphate)lysine mark.

Belongs to the class-III pyridoxal-phosphate-dependent aminotransferase family. HemL subfamily. As to quaternary structure, homodimer. Pyridoxal 5'-phosphate serves as cofactor.

The protein localises to the cytoplasm. The catalysed reaction is (S)-4-amino-5-oxopentanoate = 5-aminolevulinate. Its pathway is porphyrin-containing compound metabolism; protoporphyrin-IX biosynthesis; 5-aminolevulinate from L-glutamyl-tRNA(Glu): step 2/2. The sequence is that of Glutamate-1-semialdehyde 2,1-aminomutase from Shewanella piezotolerans (strain WP3 / JCM 13877).